The primary structure comprises 296 residues: Homoserine kinase (296 aa).

84 to 94 contacts ATP; it reads PLARGLGSSSS.

It belongs to the GHMP kinase family. Homoserine kinase subfamily.

The protein localises to the cytoplasm. The enzyme catalyses L-homoserine + ATP = O-phospho-L-homoserine + ADP + H(+). It functions in the pathway amino-acid biosynthesis; L-threonine biosynthesis; L-threonine from L-aspartate: step 4/5. In terms of biological role, catalyzes the ATP-dependent phosphorylation of L-homoserine to L-homoserine phosphate. The chain is Homoserine kinase from Lactococcus lactis subsp. cremoris (strain SK11).